Here is a 327-residue protein sequence, read N- to C-terminus: Lipid phosphate phosphatase 1 (327 aa).

Helical transmembrane passes span 51–71, 93–113, 118–138, 187–207, 217–237, and 244–264; these read WIILVILIAIEIGLNLISPFY, IWSVPVYAVLLPIIVFVCFYL, VYDLHHSILGLLFAVLITGVI, FPSGHTSWSFAGLTFLSLYLS, GHVAKLCLVIFPLLAACLVGI, and WHHWQDVFAGALIGTLVAAFC.

Belongs to the PA-phosphatase related phosphoesterase family. In terms of tissue distribution, strongly expressed in leaves, moderately in roots, weakly in floral hamps and flower buds, and not detected in adult flowers and seedpods.

The protein resides in the membrane. With respect to regulation, PA phosphatase activity inhibited by N-ethylmaleimide with an IC(50) value of 10 mM. Its function is as follows. Plays a general role in cellular responses to stress, may be by attenuating the signal produced by phospholipases. Exhibits both diacylglycerol pyrophosphate (DGPP) phosphatase and phosphatidate (PA) phosphatase activities. Substrate preference is diacylglycerol pyrophosphate &gt; phosphatidate. The polypeptide is Lipid phosphate phosphatase 1 (LPP1) (Arabidopsis thaliana (Mouse-ear cress)).